The primary structure comprises 59 residues: MSAELKITLVRSAIGQSEKMKGRLLGMGLTKREKTVTLQDTPEIRGMIAKVAHLVRVEE.

It belongs to the universal ribosomal protein uL30 family. As to quaternary structure, part of the 50S ribosomal subunit.

This chain is Large ribosomal subunit protein uL30, found in Citrifermentans bemidjiense (strain ATCC BAA-1014 / DSM 16622 / JCM 12645 / Bem) (Geobacter bemidjiensis).